Here is a 466-residue protein sequence, read N- to C-terminus: Zinc metalloproteinase/disintegrin (466 aa).

The signal sequence occupies residues 1–6 (FPYQGS). Positions 7 to 174 (SIILESGNVN…PIKKASQLIV (168 aa)) are excised as a propeptide. The 198-residue stretch at 180–377 (RYMEIVIVVD…ENPPCILNKP (198 aa)) folds into the Peptidase M12B domain. Positions 183 and 267 each coordinate Ca(2+). 3 disulfide bridges follow: Cys291-Cys372, Cys331-Cys356, and Cys333-Cys339. His316 serves as a coordination point for Zn(2+). Glu317 is an active-site residue. Zn(2+) contacts are provided by His320 and His326. The Ca(2+) site is built by Cys372 and Asn375. Positions 377–401 (PLRTDTVSTPVSGNELLEAGKDYDR) are excised as a propeptide. Residues 385-466 (TPVSGNELLE…GDCPRNPYHA (82 aa)) enclose the Disintegrin domain. 3 cysteine pairs are disulfide-bonded: Cys422/Cys428, Cys427/Cys452, and Cys440/Cys459. The Cell attachment site motif lies at 444 to 446 (RGD).

This sequence belongs to the venom metalloproteinase (M12B) family. P-II subfamily. P-IIa sub-subfamily. Monomer. It depends on Zn(2+) as a cofactor. As to expression, expressed by the venom gland.

Its subcellular location is the secreted. In terms of biological role, impairs hemostasis in the envenomed animal. Its function is as follows. Inhibits platelet aggregation induced by ADP, thrombin, platelet-activating factor and collagen. Acts by inhibiting fibrinogen interaction with platelet receptors GPIIb/GPIIIa (ITGA2B/ITGB3). The polypeptide is Zinc metalloproteinase/disintegrin (Deinagkistrodon acutus (Hundred-pace snake)).